A 392-amino-acid polypeptide reads, in one-letter code: Anhydro-N-acetylmuramic acid kinase (392 aa).

22-29 (GTSMDGVD) is a binding site for ATP.

It belongs to the anhydro-N-acetylmuramic acid kinase family.

It carries out the reaction 1,6-anhydro-N-acetyl-beta-muramate + ATP + H2O = N-acetyl-D-muramate 6-phosphate + ADP + H(+). Its pathway is amino-sugar metabolism; 1,6-anhydro-N-acetylmuramate degradation. It functions in the pathway cell wall biogenesis; peptidoglycan recycling. Catalyzes the specific phosphorylation of 1,6-anhydro-N-acetylmuramic acid (anhMurNAc) with the simultaneous cleavage of the 1,6-anhydro ring, generating MurNAc-6-P. Is required for the utilization of anhMurNAc either imported from the medium or derived from its own cell wall murein, and thus plays a role in cell wall recycling. The polypeptide is Anhydro-N-acetylmuramic acid kinase (Burkholderia pseudomallei (strain 1106a)).